The sequence spans 197 residues: Cold-regulated 413 plasma membrane protein 1 (197 aa).

Residues methionine 1–glycine 40 are Extracellular-facing. A helical transmembrane segment spans residues leucine 41–valine 61. Topologically, residues leucine 62–methionine 71 are cytoplasmic. The chain crosses the membrane as a helical span at residues leucine 72–phenylalanine 92. The Extracellular segment spans residues arginine 93–glycine 94. Residues glutamate 95–alanine 115 traverse the membrane as a helical segment. At arginine 116–glutamate 117 the chain is on the cytoplasmic side. The helical transmembrane segment at tyrosine 118–glycine 138 threads the bilayer. Topologically, residues threonine 139 to arginine 141 are extracellular. The helical transmembrane segment at aspartate 142–isoleucine 162 threads the bilayer. Over arginine 163–asparagine 176 the chain is Cytoplasmic. Residues glycine 177–phenylalanine 197 traverse the membrane as a helical segment.

The protein belongs to the Cold-regulated 413 protein family.

It localises to the membrane. The sequence is that of Cold-regulated 413 plasma membrane protein 1 (COR413PM1) from Arabidopsis thaliana (Mouse-ear cress).